Reading from the N-terminus, the 563-residue chain is TSET complex member tstC (563 aa).

Disordered stretches follow at residues 146 to 170, 192 to 213, 235 to 298, 376 to 395, and 428 to 563; these read SPHQ…SFIT, NSLS…NNDS, VLNS…NYNN, HPNA…NEFK, and GSAS…FLNF. Positions 379–395 are enriched in basic and acidic residues; sequence AGKEAKEKEKEKENEFK. A compositionally biased stretch (low complexity) spans 428–459; that stretch reads GSASSKSSPSTSPLSSSYNPSSPETSENSFSA. The segment covering 460 to 473 has biased composition (polar residues); that stretch reads TPISDSNSLKNSID. 2 stretches are compositionally biased toward low complexity: residues 474–487 and 507–543; these read NNNN…NNNN and NNSK…SSAA. A compositionally biased stretch (polar residues) spans 552-563; that stretch reads NSAKTKMNFLNF.

Component of the TSET complex, a heterohexamer composed of tstA, tstB, tstC, tstD, tstE and tstF, which may act in plasma membrane turnover. tstA, tstB, tstC and tstD are likely to be the core complex members with tstE and tstF acting as associated scaffold proteins.

The sequence is that of TSET complex member tstC from Dictyostelium discoideum (Social amoeba).